A 357-amino-acid polypeptide reads, in one-letter code: Homeobox protein HMX3 (357 aa).

Disordered regions lie at residues 1-58 (MPEP…LFAP) and 129-229 (LPRP…RKKK). Pro residues predominate over residues 16 to 27 (PQPPPPPPPAPK). 2 stretches are compositionally biased toward basic and acidic residues: residues 130-140 (PRPEASEKALL) and 149-173 (TDRD…KSPD). Residues Ser153 and Ser180 each carry the phosphoserine modification. Residues 191–209 (AAPGAAGASVGAAAATPGA) show a composition bias toward low complexity. Over residues 210–223 (EDWKKGAESPEKKP) the composition is skewed to basic and acidic residues. Residues 227–286 (KKKTRTVFSRSQVFQLESTFDMKRYLSSSERAGLAASLHLTETQVKIWFQNRRNKWKRQL) constitute a DNA-binding region (homeobox).

The protein belongs to the HMX homeobox family.

The protein localises to the nucleus. Transcription factor involved in specification of neuronal cell types and which is required for inner ear and hypothalamus development. Binds to the 5'-CAAGTG-3' core sequence. Controls semicircular canal formation in the inner ear. Also required for hypothalamic/pituitary axis of the CNS. The chain is Homeobox protein HMX3 (HMX3) from Homo sapiens (Human).